Here is a 174-residue protein sequence, read N- to C-terminus: MVIGLSTGSDDDDVEVIGGVDPRLIAVQENDSDESSLTDLVEQPAKVMRIGTMIKQLLEEVRAAPLDEASRNRLRDIHATSIRELEDGLAPELREELDRLTLPFNEDAVPSDAELRIAQAQLVGWLEGLFHGIQTALFAQQMAARAQLQQMRQGALPPGVGKSGQHGHGTGQYL.

The tract at residues 153–174 (QGALPPGVGKSGQHGHGTGQYL) is disordered. The span at 161-174 (GKSGQHGHGTGQYL) shows a compositional bias: gly residues. Residues 172–174 (QYL) carry the HbYX motif motif.

Belongs to the Bpa family. Forms a homooligomeric, either hexameric or heptameric, ring-like structure which stacks co-axially with the proteasomal alpha-rings.

Functionally, interacts with the core proteasome alpha-subunit (PrcA) through its C-terminal hydrophobic-tyrosine-X motif (HbYX motif). Interaction of Bpa with the proteasome stimulates proteasomal peptidase and casein degradation activity, which suggests Bpa could play a role in the removal of non-native or damaged proteins by influencing the conformation of the proteasome complex upon interaction. The protein is Bacterial proteasome activator (bpa) of Mycobacterium bovis (strain ATCC BAA-935 / AF2122/97).